Consider the following 546-residue polypeptide: CTP synthase (546 aa).

Residues 1–266 are amidoligase domain; sequence MAKYYIFITG…DSYVCDRFCI (266 aa). CTP is bound at residue Ser-14. Ser-14 serves as a coordination point for UTP. ATP is bound by residues 15-20 and Asp-72; that span reads SLGKGI. Residues Asp-72 and Glu-140 each contribute to the Mg(2+) site. Residues 147–149, 187–192, and Lys-223 contribute to the CTP site; these read DIE and KTKPTQ. Residues 187-192 and Lys-223 contribute to the UTP site; that span reads KTKPTQ. In terms of domain architecture, Glutamine amidotransferase type-1 spans 291–544; it reads NIGIIGKYTE…VKAAFDFKNK (254 aa). Residue Gly-352 participates in L-glutamine binding. Residue Cys-379 is the Nucleophile; for glutamine hydrolysis of the active site. L-glutamine is bound by residues 380-383, Glu-403, and Arg-470; that span reads LGMQ. Residues His-517 and Glu-519 contribute to the active site.

It belongs to the CTP synthase family. As to quaternary structure, homotetramer.

It carries out the reaction UTP + L-glutamine + ATP + H2O = CTP + L-glutamate + ADP + phosphate + 2 H(+). It catalyses the reaction L-glutamine + H2O = L-glutamate + NH4(+). The catalysed reaction is UTP + NH4(+) + ATP = CTP + ADP + phosphate + 2 H(+). It participates in pyrimidine metabolism; CTP biosynthesis via de novo pathway; CTP from UDP: step 2/2. Allosterically activated by GTP, when glutamine is the substrate; GTP has no effect on the reaction when ammonia is the substrate. The allosteric effector GTP functions by stabilizing the protein conformation that binds the tetrahedral intermediate(s) formed during glutamine hydrolysis. Inhibited by the product CTP, via allosteric rather than competitive inhibition. Functionally, catalyzes the ATP-dependent amination of UTP to CTP with either L-glutamine or ammonia as the source of nitrogen. Regulates intracellular CTP levels through interactions with the four ribonucleotide triphosphates. This is CTP synthase from Wigglesworthia glossinidia brevipalpis.